Consider the following 357-residue polypeptide: Maleylacetate reductase 1 (357 aa).

This sequence belongs to the iron-containing alcohol dehydrogenase family.

The enzyme catalyses 3-oxoadipate + NAD(+) = maleylacetate + NADH + H(+). The catalysed reaction is 3-oxoadipate + NADP(+) = maleylacetate + NADPH + H(+). Its pathway is aromatic compound metabolism; 3-chlorocatechol degradation. Plays a major role in the degradation of chloroaromatic compounds by channeling maleylacetate and some of its substituted derivatives into the 3-oxoadipate pathway. This enzyme converts maleylacetate and 2-chloromaleylacetate with similar efficiencies. In Rhodococcus opacus (Nocardia opaca), this protein is Maleylacetate reductase 1 (macA).